We begin with the raw amino-acid sequence, 135 residues long: Probable holin (135 aa).

2 consecutive transmembrane segments (helical) span residues 24-41 and 62-84; these read LMLVLNIIDIITGVIKAW and FLVVIVANAIDTIMDLNGVLTFA.

It belongs to the bacteriophage holin family. Cp-1 holin subfamily.

The protein localises to the host membrane. Its function is as follows. Produces a lesion in the cytoplasmic membrane allowing the phage lysosyme to attack the peptidoglycan. This chain is Probable holin (45), found in Bacillus phage phi105 (Bacteriophage phi-105).